We begin with the raw amino-acid sequence, 421 residues long: Extracellular signal-regulated kinase 1 (421 aa).

The Protein kinase domain maps to 70-375; that stretch reads YQILEIVGEG…VEDALKHPYL (306 aa). Residues 76–84 and Lys-99 each bind ATP; that span reads VGEGAYGIV. Asp-194 (proton acceptor) is an active-site residue. The residue at position 230 (Thr-230) is a Phosphothreonine. The TXY motif lies at 230 to 232; it reads TEY. The residue at position 232 (Tyr-232) is a Phosphotyrosine.

This sequence belongs to the protein kinase superfamily. CMGC Ser/Thr protein kinase family. MAP kinase subfamily. The cofactor is Mg(2+). Dually phosphorylated on Thr-230 and Tyr-232, which activates the enzyme.

It catalyses the reaction L-seryl-[protein] + ATP = O-phospho-L-seryl-[protein] + ADP + H(+). It carries out the reaction L-threonyl-[protein] + ATP = O-phospho-L-threonyl-[protein] + ADP + H(+). Its activity is regulated as follows. Activated by tyrosine and threonine phosphorylation. This chain is Extracellular signal-regulated kinase 1 (CEK1), found in Candida albicans (strain SC5314 / ATCC MYA-2876) (Yeast).